Reading from the N-terminus, the 330-residue chain is Probable cytosolic iron-sulfur protein assembly protein ciao1-A (330 aa).

7 WD repeats span residues 14 to 53 (HPDS…WECK), 59 to 98 (GHQR…FECL), 103 to 142 (GHEN…EYEC), 148 to 187 (SHTQ…WECR), 192 to 231 (GHTS…GGQD), 243 to 282 (FHGR…DPDQ), and 294 to 330 (AHSQ…QSEV).

The protein belongs to the WD repeat CIA1 family. Component of the CIA complex.

Its function is as follows. Key component of the cytosolic iron-sulfur protein assembly (CIA) complex, a multiprotein complex that mediates the incorporation of iron-sulfur cluster into extramitochondrial Fe/S proteins. This chain is Probable cytosolic iron-sulfur protein assembly protein ciao1-A (ciao1a), found in Salmo salar (Atlantic salmon).